A 360-amino-acid polypeptide reads, in one-letter code: Biotin synthase (360 aa).

The tract at residues 1-25 (MQHAPLNFVPDAAKVPPTPGQSPNA) is disordered. Positions 58-285 (NAVQLSTLLS…KAMVRLSAGR (228 aa)) constitute a Radical SAM core domain. Residues Cys-73, Cys-77, and Cys-80 each contribute to the [4Fe-4S] cluster site. [2Fe-2S] cluster-binding residues include Cys-117, Cys-148, Cys-208, and Arg-280. The interval 340–360 (QAEGAQHSHSSHCHIDITPAD) is disordered.

Belongs to the radical SAM superfamily. Biotin synthase family. Homodimer. [4Fe-4S] cluster serves as cofactor. The cofactor is [2Fe-2S] cluster.

It catalyses the reaction (4R,5S)-dethiobiotin + (sulfur carrier)-SH + 2 reduced [2Fe-2S]-[ferredoxin] + 2 S-adenosyl-L-methionine = (sulfur carrier)-H + biotin + 2 5'-deoxyadenosine + 2 L-methionine + 2 oxidized [2Fe-2S]-[ferredoxin]. It participates in cofactor biosynthesis; biotin biosynthesis; biotin from 7,8-diaminononanoate: step 2/2. In terms of biological role, catalyzes the conversion of dethiobiotin (DTB) to biotin by the insertion of a sulfur atom into dethiobiotin via a radical-based mechanism. The chain is Biotin synthase from Ralstonia nicotianae (strain ATCC BAA-1114 / GMI1000) (Ralstonia solanacearum).